A 429-amino-acid polypeptide reads, in one-letter code: Glutamate-1-semialdehyde 2,1-aminomutase (429 aa).

Lysine 265 carries the post-translational modification N6-(pyridoxal phosphate)lysine.

This sequence belongs to the class-III pyridoxal-phosphate-dependent aminotransferase family. HemL subfamily. In terms of assembly, homodimer. Pyridoxal 5'-phosphate is required as a cofactor.

The protein localises to the cytoplasm. The catalysed reaction is (S)-4-amino-5-oxopentanoate = 5-aminolevulinate. Its pathway is porphyrin-containing compound metabolism; protoporphyrin-IX biosynthesis; 5-aminolevulinate from L-glutamyl-tRNA(Glu): step 2/2. The protein is Glutamate-1-semialdehyde 2,1-aminomutase of Shewanella halifaxensis (strain HAW-EB4).